A 1066-amino-acid polypeptide reads, in one-letter code: MILEENKGMFALPGFDLIQYEGFKRFINQGLMEELLKFPKIQDADQEVEFLLVGDQYKLREPSIKEKDAVYKCVTYSSELYVPARLTQKRNRRIREQILFMGSIPLMTSQGTFIINGVTRVLVNQIVRSPGIFYSREPDHKRIPLYTGTIISNWGGRFKLEIDGRMRIWARISKERKFSIITLLLALGLTRKDILNGVCYPNILLDLWKRQDKDIKSSEDAIIELYKNLYCVSGDVTFSESIRKELQRKLFKQRFELGQIGRRNPNNKLNLNVPENESFLLPQDLLAAIDYLIGIKYGIGTLDDIDHLKNRRVRSVANFLQGQLRLALTHLENSIRQTMHKAIKRKRSLTPKGLVISTPLLTTFKEFFGSHPLSQFLDQTNPLAEMIHKRRLSTLGPGGLTRRTASFQVRDIHPSYYGRICPIETSEGINAGLITSLALHARVNDYGYLHSSFYNISDDEEHIVYLSPAEDEYYRIATGNQLASNWGTQEKQVTLARYRQEFLTIAWEQVHFRSLFPLQYFSIGASLIPFLEHNDANRALMGSHMQRQAVPLLKPEKCIVGTGLEGQVALDSGSVTRSTQEGQIVYVDGAKITLSLNDNETIDTELITYKRSNNKTCIKERPIISTGTYLKEGQLLADGTATVGGELAPGRNILVAYMPWEGYNFEDAILISERLISEDIFTSLHIERYEIEVRITNQGIEEITKDIPHLDSYVLRHLDSNGLVVLGSWVETGDVLVGKLTPQEDSLRAPEGKLLQAIFGIQVADTKESCLKVPIGGQGRVIDARWVYKENILINNAKTIHIYILQKRKIRVGDKVAGRHGNKGIVSKILPRQDMPHLQDGTPVDMILSPLGVPSRMNVGQIFECLLGLAGDFMQRHYRITPFDERFEREASRKLVFSELCEASEKTRNPWLFEPDYPGKSRLIDGRTGDTFEQPVTVGKAYMMKLIHQVDDKIHARSSGPYALITQQPLRGRSRRGGQRVGEMEVWALESFGAAYILQEMLTLKSDHIQARYKVLGAIVTGKPIPKPNSVPESFRLLVRELRSLALNLNYFLISEKDLEREMKNV.

This sequence belongs to the RNA polymerase beta chain family. In terms of assembly, in plastids the minimal PEP RNA polymerase catalytic core is composed of four subunits: alpha, beta, beta', and beta''. When a (nuclear-encoded) sigma factor is associated with the core the holoenzyme is formed, which can initiate transcription.

The protein resides in the plastid. Its subcellular location is the chloroplast. The enzyme catalyses RNA(n) + a ribonucleoside 5'-triphosphate = RNA(n+1) + diphosphate. In terms of biological role, DNA-dependent RNA polymerase catalyzes the transcription of DNA into RNA using the four ribonucleoside triphosphates as substrates. This is DNA-directed RNA polymerase subunit beta from Psilotum nudum (Whisk fern).